A 219-amino-acid chain; its full sequence is Ribosomal RNA small subunit methyltransferase I (219 aa).

This sequence belongs to the methyltransferase superfamily. RsmI family.

It is found in the cytoplasm. It catalyses the reaction cytidine(1402) in 16S rRNA + S-adenosyl-L-methionine = 2'-O-methylcytidine(1402) in 16S rRNA + S-adenosyl-L-homocysteine + H(+). Catalyzes the 2'-O-methylation of the ribose of cytidine 1402 (C1402) in 16S rRNA. The chain is Ribosomal RNA small subunit methyltransferase I from Coprothermobacter proteolyticus (strain ATCC 35245 / DSM 5265 / OCM 4 / BT).